Consider the following 499-residue polypeptide: Pentatricopeptide repeat-containing protein At5g61800 (499 aa).

PPR repeat units follow at residues 78-113 (STFC…SVPP), 114-150 (DFHT…GLLS), 151-181 (DLFT…NPQR), 182-212 (DVVT…MPLR), 213-247 (DLVS…GLKP), 248-282 (DNVA…RLFI), 283-313 (DSFL…CSDK), 314-348 (TLFT…GIKP), 349-379 (DGVT…MRSL), and 385-419 (EMKH…GGNR). The tract at residues 424 to 499 (AWSGLLGGCR…KNVGFSKVLS (76 aa)) is type E motif.

It belongs to the PPR family. PCMP-E subfamily.

The protein is Pentatricopeptide repeat-containing protein At5g61800 (PCMP-E8) of Arabidopsis thaliana (Mouse-ear cress).